A 248-amino-acid polypeptide reads, in one-letter code: Ribosomal RNA small subunit methyltransferase G (248 aa).

Residues Gly-85, Phe-90, 137–138 (IE), and Arg-156 each bind S-adenosyl-L-methionine.

The protein belongs to the methyltransferase superfamily. RNA methyltransferase RsmG family.

The protein resides in the cytoplasm. Its function is as follows. Specifically methylates the N7 position of a guanine in 16S rRNA. The chain is Ribosomal RNA small subunit methyltransferase G from Parasynechococcus marenigrum (strain WH8102).